A 484-amino-acid polypeptide reads, in one-letter code: Sperm-associated antigen 8 (484 aa).

The span at 1–11 (METSESTDRSQ) shows a compositional bias: basic and acidic residues. Disordered stretches follow at residues 1–32 (METSESTDRSQSRCLDLQPSSDGLGSSSDPFS), 123–221 (DLSS…SAPV), and 324–348 (LQPQSPTSSCTTQKDSYQPPKSHCQ). Composition is skewed to low complexity over residues 20–32 (SSDGLGSSSDPFS) and 125–160 (SSSRGPIPGSSSGPVPGSSSSPGPDSSSDPGPSSSS). A compositionally biased stretch (gly residues) spans 161–195 (GPGGSPGGSGRGPGHGPGPGGGSGQGPGGGSGQGT). Polar residues predominate over residues 324–339 (LQPQSPTSSCTTQKDS). Mn regions lie at residues 332–345 (SCTTQKDSYQPPKS) and 384–398 (ESVTHHDYKKELVQA). The tract at residues 455–484 (PLPFEPESYSQHGEISSLACQGGGQGGGGG) is disordered. Residues 475-484 (QGGGQGGGGG) are compositionally biased toward gly residues.

The protein belongs to the SPAG8 family. Microtubule inner protein component of sperm flagellar doublet microtubules. Interacts with FHL5 (via second LIM domain). Interacts with RANBP9. In terms of tissue distribution, expressed in trachea multiciliated cells.

It localises to the cytoplasm. It is found in the nucleus. The protein resides in the cytoplasmic vesicle. Its subcellular location is the secretory vesicle. The protein localises to the acrosome. It localises to the cytoskeleton. It is found in the microtubule organizing center. The protein resides in the spindle. Its subcellular location is the cilium axoneme. The protein localises to the flagellum axoneme. Microtubule inner protein (MIP) part of the dynein-decorated doublet microtubules (DMTs) in cilia axoneme, which is required for motile cilia beating. Plays a role in spermatogenesis by enhancing the binding of CREM isoform tau to its coactivator FHL5 and increasing the FHL5-regulated transcriptional activation of CREM isoform tau. Involved in the acrosome reaction and in binding of sperm to the zona pellucida. Plays a role in regulation of the cell cycle by controlling progression through the G2/M phase, possibly by delaying the activation of CDK1 which is required for entry into mitosis. May play a role in fertility and microtubule formation through interaction with RANBP9. This chain is Sperm-associated antigen 8 (SPAG8), found in Bos taurus (Bovine).